Reading from the N-terminus, the 72-residue chain is UPF0270 protein PM1156 (72 aa).

This sequence belongs to the UPF0270 family.

The polypeptide is UPF0270 protein PM1156 (Pasteurella multocida (strain Pm70)).